We begin with the raw amino-acid sequence, 161 residues long: ATP synthase subunit b 1 (161 aa).

The chain crosses the membrane as a helical span at residues 5–25 (EFWVAVAFVIFCGIVWKAGGF).

It belongs to the ATPase B chain family. In terms of assembly, F-type ATPases have 2 components, F(1) - the catalytic core - and F(0) - the membrane proton channel. F(1) has five subunits: alpha(3), beta(3), gamma(1), delta(1), epsilon(1). F(0) has three main subunits: a(1), b(2) and c(10-14). The alpha and beta chains form an alternating ring which encloses part of the gamma chain. F(1) is attached to F(0) by a central stalk formed by the gamma and epsilon chains, while a peripheral stalk is formed by the delta and b chains.

The protein localises to the cell inner membrane. F(1)F(0) ATP synthase produces ATP from ADP in the presence of a proton or sodium gradient. F-type ATPases consist of two structural domains, F(1) containing the extramembraneous catalytic core and F(0) containing the membrane proton channel, linked together by a central stalk and a peripheral stalk. During catalysis, ATP synthesis in the catalytic domain of F(1) is coupled via a rotary mechanism of the central stalk subunits to proton translocation. Its function is as follows. Component of the F(0) channel, it forms part of the peripheral stalk, linking F(1) to F(0). The chain is ATP synthase subunit b 1 from Methylobacterium sp. (strain 4-46).